The primary structure comprises 132 residues: Fatty acid-binding protein, adipocyte (132 aa).

Position 2 is an N-acetylcysteine (C2). Residue S13 is modified to Phosphoserine. At Y20 the chain carries Phosphotyrosine; by Tyr-kinases. The Nuclear localization signal motif lies at 22-32; it reads KEVGVGFATRK. Residue 127-129 coordinates a fatty acid; that stretch reads RVY.

The protein belongs to the calycin superfamily. Fatty-acid binding protein (FABP) family. As to quaternary structure, monomer. Homodimer. Interacts with PPARG.

The protein localises to the cytoplasm. It localises to the nucleus. Lipid transport protein in adipocytes. Binds both long chain fatty acids and retinoic acid. Delivers long-chain fatty acids and retinoic acid to their cognate receptors in the nucleus. This is Fatty acid-binding protein, adipocyte (FABP4) from Cervus elaphus (Red deer).